A 247-amino-acid chain; its full sequence is Aspartate/glutamate leucyltransferase (247 aa).

Belongs to the R-transferase family. Bpt subfamily.

Its subcellular location is the cytoplasm. It carries out the reaction N-terminal L-glutamyl-[protein] + L-leucyl-tRNA(Leu) = N-terminal L-leucyl-L-glutamyl-[protein] + tRNA(Leu) + H(+). The catalysed reaction is N-terminal L-aspartyl-[protein] + L-leucyl-tRNA(Leu) = N-terminal L-leucyl-L-aspartyl-[protein] + tRNA(Leu) + H(+). Functions in the N-end rule pathway of protein degradation where it conjugates Leu from its aminoacyl-tRNA to the N-termini of proteins containing an N-terminal aspartate or glutamate. This chain is Aspartate/glutamate leucyltransferase, found in Dechloromonas aromatica (strain RCB).